The chain runs to 114 residues: DNA-directed RNA polymerase subunit omega (114 aa).

This sequence belongs to the RNA polymerase subunit omega family. The RNAP catalytic core consists of 2 alpha, 1 beta, 1 beta' and 1 omega subunit. When a sigma factor is associated with the core the holoenzyme is formed, which can initiate transcription.

It catalyses the reaction RNA(n) + a ribonucleoside 5'-triphosphate = RNA(n+1) + diphosphate. Functionally, promotes RNA polymerase assembly. Latches the N- and C-terminal regions of the beta' subunit thereby facilitating its interaction with the beta and alpha subunits. The sequence is that of DNA-directed RNA polymerase subunit omega from Novosphingobium aromaticivorans (strain ATCC 700278 / DSM 12444 / CCUG 56034 / CIP 105152 / NBRC 16084 / F199).